The chain runs to 344 residues: Cinnamoyl-CoA reductase 1 (344 aa).

Serine 7 carries the phosphoserine modification. Residues 17 to 23 (GAGGYIA), arginine 42, lysine 48, 68 to 69 (DL), 88 to 90 (TAS), tyrosine 161, lysine 165, 188 to 191 (PVLV), and serine 203 contribute to the NADP(+) site. Cysteine 154 and cysteine 162 are oxidised to a cystine. The active-site Proton donor is lysine 165. Positions 317–344 (QEKGHLAPPPPPPSASQESVENGIKIGS) are disordered.

Belongs to the NAD(P)-dependent epimerase/dehydratase family. Dihydroflavonol-4-reductase subfamily. In terms of tissue distribution, expressed in leaves, stems and flowers.

It catalyses the reaction (E)-cinnamaldehyde + NADP(+) + CoA = (E)-cinnamoyl-CoA + NADPH + H(+). It functions in the pathway aromatic compound metabolism; phenylpropanoid biosynthesis. Its function is as follows. Involved in the latter stages of lignin biosynthesis. Catalyzes one of the last steps of monolignol biosynthesis, the conversion of cinnamoyl-CoAs into their corresponding cinnamaldehydes. The polypeptide is Cinnamoyl-CoA reductase 1 (Arabidopsis thaliana (Mouse-ear cress)).